The sequence spans 278 residues: Complement C1q tumor necrosis factor-related protein 6 (278 aa).

Residues 1 to 46 (MQWLRVRESPGEATGHRVTMGTAALGPVWAALLLFLLMCEIPMVEL) form the signal peptide. Residue N91 is glycosylated (N-linked (GlcNAc...) asparagine). Positions 97 to 138 (GDKGDPGPMGLPGYMGREGPQGEPGPQGSKGDKGEMGSPGAP) constitute a Collagen-like domain. Residues 99–135 (KGDPGPMGLPGYMGREGPQGEPGPQGSKGDKGEMGSP) form a disordered region. The C1q domain maps to 139-259 (CQKRFFAFSV…KRQRENAIYS (121 aa)).

It is found in the secreted. The chain is Complement C1q tumor necrosis factor-related protein 6 (C1QTNF6) from Homo sapiens (Human).